The chain runs to 390 residues: 1-deoxy-D-xylulose 5-phosphate reductoisomerase (390 aa).

The NADPH site is built by T10, G11, S12, V13, G38, N40, and N123. K124 provides a ligand contact to 1-deoxy-D-xylulose 5-phosphate. E125 contributes to the NADPH binding site. D149 contributes to the Mn(2+) binding site. Residues S150, E151, S175, and H198 each contribute to the 1-deoxy-D-xylulose 5-phosphate site. Position 151 (E151) interacts with Mn(2+). G204 contributes to the NADPH binding site. Residues S211, N216, K217, and E220 each coordinate 1-deoxy-D-xylulose 5-phosphate. E220 serves as a coordination point for Mn(2+).

This sequence belongs to the DXR family. Mg(2+) serves as cofactor. The cofactor is Mn(2+).

It carries out the reaction 2-C-methyl-D-erythritol 4-phosphate + NADP(+) = 1-deoxy-D-xylulose 5-phosphate + NADPH + H(+). Its pathway is isoprenoid biosynthesis; isopentenyl diphosphate biosynthesis via DXP pathway; isopentenyl diphosphate from 1-deoxy-D-xylulose 5-phosphate: step 1/6. Its function is as follows. Catalyzes the NADPH-dependent rearrangement and reduction of 1-deoxy-D-xylulose-5-phosphate (DXP) to 2-C-methyl-D-erythritol 4-phosphate (MEP). This Paracoccus denitrificans (strain Pd 1222) protein is 1-deoxy-D-xylulose 5-phosphate reductoisomerase.